The following is a 356-amino-acid chain: Molybdenum import ATP-binding protein ModC (356 aa).

The region spanning 1–232 (MEDIHARFHI…LDLPIRLGED (232 aa)) is the ABC transporter domain. Residue 33 to 40 (GHSGSGKT) coordinates ATP. The region spanning 291-356 (ETSVLNLLRG…VQVKSVALME (66 aa)) is the Mop domain.

This sequence belongs to the ABC transporter superfamily. Molybdate importer (TC 3.A.1.8) family. In terms of assembly, the complex is composed of two ATP-binding proteins (ModC), two transmembrane proteins (ModB) and a solute-binding protein (ModA).

It localises to the cell inner membrane. The catalysed reaction is molybdate(out) + ATP + H2O = molybdate(in) + ADP + phosphate + H(+). Its function is as follows. Part of the ABC transporter complex ModABC involved in molybdenum import. Responsible for energy coupling to the transport system. In Methylococcus capsulatus (strain ATCC 33009 / NCIMB 11132 / Bath), this protein is Molybdenum import ATP-binding protein ModC.